Here is a 147-residue protein sequence, read N- to C-terminus: Large ribosomal subunit protein uL15 (147 aa).

Residues 16 to 63 form a disordered region; the sequence is SSRARVGRGIGSGLGKTAGRGHKGSFARKGGGKIKPGFEGGQTPMQRR. Residues 23-33 show a composition bias toward gly residues; the sequence is RGIGSGLGKTA. Over residues 34 to 47 the composition is skewed to basic residues; that stretch reads GRGHKGSFARKGGG.

This sequence belongs to the universal ribosomal protein uL15 family. As to quaternary structure, part of the 50S ribosomal subunit.

In terms of biological role, binds to the 23S rRNA. This Xylella fastidiosa (strain Temecula1 / ATCC 700964) protein is Large ribosomal subunit protein uL15.